A 406-amino-acid chain; its full sequence is MTWRTTRTLLQPQKLDFNEFEILTSVIEGARIVGIGEGAHFVAEFSLARASLIRYLVERHEFNAIGLECGAIQASRLSEWLNSTAGAHELERFSDTLTFSVYGSVLIWLKSYLRESGRKLQLVGIDLPNTLNPRDDLAQLAEIIQLIDHLMKPHVDMLTHLLASIDGQSAVISSAKWGELETARQEKAISGVTRLKLRLASLAPVLKKHVNSDLFRKASDRIESIEYTLETLRIMKTFFDGTSLEGDTSVRDSYMAGVVDGMVRANPDVKIILLAHNNHLQKTPVSFSGELTAVPMGQHLAERVNYRAIAFTHLGPTVPEMHFPSPKSPLGFSVVTTPADAIREDSMEQYVIDACGTENSCLTLTDAPMEAKRMRSQSASVETKLSEAFDAIVCVTSAGKDSLVAL.

In terms of biological role, this enzyme confers resistance to erythromycin through inactivation by hydrolyzing the lactone ring of the antibiotic. In Escherichia coli, this protein is Erythromycin esterase type I (ereA).